The chain runs to 427 residues: Glutamate-1-semialdehyde 2,1-aminomutase (427 aa).

Lys-267 carries the post-translational modification N6-(pyridoxal phosphate)lysine.

It belongs to the class-III pyridoxal-phosphate-dependent aminotransferase family. HemL subfamily. Homodimer. The cofactor is pyridoxal 5'-phosphate.

It localises to the cytoplasm. It catalyses the reaction (S)-4-amino-5-oxopentanoate = 5-aminolevulinate. The protein operates within porphyrin-containing compound metabolism; protoporphyrin-IX biosynthesis; 5-aminolevulinate from L-glutamyl-tRNA(Glu): step 2/2. The protein is Glutamate-1-semialdehyde 2,1-aminomutase of Thermodesulfovibrio yellowstonii (strain ATCC 51303 / DSM 11347 / YP87).